The sequence spans 528 residues: Pentatricopeptide repeat-containing protein At1g62914, mitochondrial (528 aa).

The N-terminal 20 residues, 1-20 (MLAKISSSAKRFVHRSLVVR), are a transit peptide targeting the mitochondrion. PPR repeat units follow at residues 77 to 111 (SIIE…GISH), 112 to 146 (NLYT…GYEP), 147 to 181 (DIVT…GYKP), 182 to 216 (DTVT…GCQP), 217 to 251 (DLVT…KIEA), 252 to 286 (NVVI…GVRP), 287 to 321 (NVIT…KINP), 322 to 356 (NLVT…SIDP), 357 to 391 (NIFT…DCLP), 392 to 426 (NVVT…GLVG), 427 to 461 (NTVT…GVHP), 462 to 496 (NILT…TMEP), and 497 to 528 (DIYT…ALKE).

The protein belongs to the PPR family. P subfamily.

It localises to the mitochondrion. The sequence is that of Pentatricopeptide repeat-containing protein At1g62914, mitochondrial from Arabidopsis thaliana (Mouse-ear cress).